The sequence spans 372 residues: Envelope phospholipase OPG057 (372 aa).

Positions 153–156 (YPPL) match the YPPL motif. Residues Cys-185 and Cys-186 are each lipidated (S-palmitoyl cysteine; by host). One can recognise a PLD phosphodiesterase domain in the interval 307 to 334 (FTIQNNTKLLIVDDEYVHITSANFDGTH).

Belongs to the orthopoxvirus OPG057 family. In terms of assembly, interacts with protein OPG190. In terms of processing, palmitoylated. Attachment of the palmitate moiety is essential for correct intracellular targeting and protein function.

Its subcellular location is the virion membrane. It is found in the host Golgi apparatus. The protein resides in the host trans-Golgi network. It localises to the host endoplasmic reticulum membrane. It catalyses the reaction a 1,2-diacyl-sn-glycero-3-phosphocholine + H2O = a 1,2-diacyl-sn-glycero-3-phosphate + choline + H(+). Major envelope protein that plays a role in the biogenesis of the viral double membrane and in egress of virus from the host cell. Produces the wrapped form of virus that is required for cell-to-cell spread. Acts as a lipase with broad specificity including phospholipase C, phospholipase A, and triacylglycerol lipase activities. The protein is Envelope phospholipase OPG057 (OPG057) of Variola virus (isolate Human/India/Ind3/1967) (VARV).